The following is a 275-amino-acid chain: Large ribosomal subunit protein uL2c (275 aa).

The segment at 225–259 (KNPVDHPHGGGEGRAPIGRSTPVTPWGKPALGRRT) is disordered.

It belongs to the universal ribosomal protein uL2 family. Part of the 50S ribosomal subunit.

The protein resides in the plastid. It localises to the cyanelle. This chain is Large ribosomal subunit protein uL2c (rpl2), found in Cyanophora paradoxa.